A 187-amino-acid polypeptide reads, in one-letter code: DNA-directed RNA polymerase subunit Rpo7 (187 aa).

The region spanning 82–166 (YELIEGEVVD…RGSKIALTMR (85 aa)) is the S1 motif domain.

It belongs to the eukaryotic RPB7/RPC8 RNA polymerase subunit family. In terms of assembly, part of the RNA polymerase complex. Forms a stalk with Rpo4 that extends from the main structure.

Its subcellular location is the cytoplasm. It catalyses the reaction RNA(n) + a ribonucleoside 5'-triphosphate = RNA(n+1) + diphosphate. In terms of biological role, DNA-dependent RNA polymerase (RNAP) catalyzes the transcription of DNA into RNA using the four ribonucleoside triphosphates as substrates. The chain is DNA-directed RNA polymerase subunit Rpo7 from Methanocaldococcus jannaschii (strain ATCC 43067 / DSM 2661 / JAL-1 / JCM 10045 / NBRC 100440) (Methanococcus jannaschii).